A 322-amino-acid chain; its full sequence is 4-hydroxythreonine-4-phosphate dehydrogenase (322 aa).

The substrate site is built by H126 and T127. The a divalent metal cation site is built by H160, H205, and H260. K268, N277, and R286 together coordinate substrate.

This sequence belongs to the PdxA family. In terms of assembly, homodimer. It depends on Zn(2+) as a cofactor. The cofactor is Mg(2+). Co(2+) is required as a cofactor.

Its subcellular location is the cytoplasm. The catalysed reaction is 4-(phosphooxy)-L-threonine + NAD(+) = 3-amino-2-oxopropyl phosphate + CO2 + NADH. It participates in cofactor biosynthesis; pyridoxine 5'-phosphate biosynthesis; pyridoxine 5'-phosphate from D-erythrose 4-phosphate: step 4/5. Functionally, catalyzes the NAD(P)-dependent oxidation of 4-(phosphooxy)-L-threonine (HTP) into 2-amino-3-oxo-4-(phosphooxy)butyric acid which spontaneously decarboxylates to form 3-amino-2-oxopropyl phosphate (AHAP). The sequence is that of 4-hydroxythreonine-4-phosphate dehydrogenase from Paracoccus denitrificans (strain Pd 1222).